The sequence spans 246 residues: 3-deoxy-manno-octulosonate cytidylyltransferase (246 aa).

The protein belongs to the KdsB family.

It localises to the cytoplasm. The catalysed reaction is 3-deoxy-alpha-D-manno-oct-2-ulosonate + CTP = CMP-3-deoxy-beta-D-manno-octulosonate + diphosphate. It participates in nucleotide-sugar biosynthesis; CMP-3-deoxy-D-manno-octulosonate biosynthesis; CMP-3-deoxy-D-manno-octulosonate from 3-deoxy-D-manno-octulosonate and CTP: step 1/1. It functions in the pathway bacterial outer membrane biogenesis; lipopolysaccharide biosynthesis. Functionally, activates KDO (a required 8-carbon sugar) for incorporation into bacterial lipopolysaccharide in Gram-negative bacteria. The chain is 3-deoxy-manno-octulosonate cytidylyltransferase from Leptospira borgpetersenii serovar Hardjo-bovis (strain JB197).